The chain runs to 269 residues: Hydroxyethylthiazole kinase (269 aa).

Met42 is a substrate binding site. Arg118 and Ser164 together coordinate ATP. Substrate is bound at residue Gly191.

This sequence belongs to the Thz kinase family. Mg(2+) serves as cofactor.

The catalysed reaction is 5-(2-hydroxyethyl)-4-methylthiazole + ATP = 4-methyl-5-(2-phosphooxyethyl)-thiazole + ADP + H(+). It participates in cofactor biosynthesis; thiamine diphosphate biosynthesis; 4-methyl-5-(2-phosphoethyl)-thiazole from 5-(2-hydroxyethyl)-4-methylthiazole: step 1/1. Its function is as follows. Catalyzes the phosphorylation of the hydroxyl group of 4-methyl-5-beta-hydroxyethylthiazole (THZ). In Listeria welshimeri serovar 6b (strain ATCC 35897 / DSM 20650 / CCUG 15529 / CIP 8149 / NCTC 11857 / SLCC 5334 / V8), this protein is Hydroxyethylthiazole kinase.